We begin with the raw amino-acid sequence, 204 residues long: GTP cyclohydrolase 1 (204 aa).

Positions 92, 95, and 165 each coordinate Zn(2+).

The protein belongs to the GTP cyclohydrolase I family. Homomer.

The catalysed reaction is GTP + H2O = 7,8-dihydroneopterin 3'-triphosphate + formate + H(+). Its pathway is cofactor biosynthesis; 7,8-dihydroneopterin triphosphate biosynthesis; 7,8-dihydroneopterin triphosphate from GTP: step 1/1. The polypeptide is GTP cyclohydrolase 1 (Mycolicibacterium paratuberculosis (strain ATCC BAA-968 / K-10) (Mycobacterium paratuberculosis)).